The chain runs to 203 residues: MGMRFLKNEKGFTGLEAAIVLIAFVTVAAVFSYVLLGAGFFATQKGQETVHTGVKQATSSMELVGSIVAKGSTTNDNITEVTFTLQLAAGGQPIDLNKTVITVLVPKDGDFVELSYESNSSSLDKASEYYVNWIYSLQGSSPDNYLEEFEKAEVTVYLDSTGAGLDINPNDDFIIEVKPPIGATYPIELKAPPSIDSMMVLLK.

The propeptide occupies 1 to 11 (MGMRFLKNEKG).

This sequence belongs to the archaeal flagellin family.

It is found in the archaeal flagellum. Functionally, flagellin is the subunit protein which polymerizes to form the filaments of archaeal flagella. This is Probable flagellin 1 (flaB1) from Archaeoglobus fulgidus (strain ATCC 49558 / DSM 4304 / JCM 9628 / NBRC 100126 / VC-16).